The following is a 1024-amino-acid chain: Carbamoyl phosphate synthase large chain (1024 aa).

The tract at residues 1–396 (MDIKKILVIG…AWQKAVRMID (396 aa)) is carboxyphosphate synthetic domain. ATP contacts are provided by Arg-125, Arg-165, Gly-171, Gly-172, Lys-204, Leu-206, Glu-211, Gly-237, Val-238, His-239, Gln-280, and Glu-294. The ATP-grasp 1 domain maps to 129–323 (QKAMREAGIP…LAYIAAKLAL (195 aa)). Mg(2+) is bound by residues Gln-280, Glu-294, and Asn-296. Mn(2+) is bound by residues Gln-280, Glu-294, and Asn-296. Residues 397–536 (IGEPGLVGGP…LTYGGQYDDK (140 aa)) are oligomerization domain. The segment at 536-917 (KTPGVDYLVV…LKSWLSATPN (382 aa)) is carbamoyl phosphate synthetic domain. Residues 660-849 (SKLLDRLGIK…YMSLVADVLT (190 aa)) form the ATP-grasp 2 domain. The ATP site is built by Arg-696, Lys-735, Glu-742, Gly-766, Val-767, His-768, Ser-769, Gln-809, and Glu-820. Mg(2+) contacts are provided by Gln-809, Glu-820, and Asn-822. Gln-809, Glu-820, and Asn-822 together coordinate Mn(2+). In terms of domain architecture, MGS-like spans 917 to 1024 (NKIPSKTALI…KNGKLEVAPW (108 aa)). Positions 918–1024 (KIPSKTALIY…KNGKLEVAPW (107 aa)) are allosteric domain.

Belongs to the CarB family. Composed of two chains; the small (or glutamine) chain promotes the hydrolysis of glutamine to ammonia, which is used by the large (or ammonia) chain to synthesize carbamoyl phosphate. Tetramer of heterodimers (alpha,beta)4. Mg(2+) is required as a cofactor. Mn(2+) serves as cofactor.

It carries out the reaction hydrogencarbonate + L-glutamine + 2 ATP + H2O = carbamoyl phosphate + L-glutamate + 2 ADP + phosphate + 2 H(+). The enzyme catalyses hydrogencarbonate + NH4(+) + 2 ATP = carbamoyl phosphate + 2 ADP + phosphate + 2 H(+). The protein operates within amino-acid biosynthesis; L-arginine biosynthesis; carbamoyl phosphate from bicarbonate: step 1/1. It functions in the pathway pyrimidine metabolism; UMP biosynthesis via de novo pathway; (S)-dihydroorotate from bicarbonate: step 1/3. Its function is as follows. Large subunit of the glutamine-dependent carbamoyl phosphate synthetase (CPSase). CPSase catalyzes the formation of carbamoyl phosphate from the ammonia moiety of glutamine, carbonate, and phosphate donated by ATP, constituting the first step of 2 biosynthetic pathways, one leading to arginine and/or urea and the other to pyrimidine nucleotides. The large subunit (synthetase) binds the substrates ammonia (free or transferred from glutamine from the small subunit), hydrogencarbonate and ATP and carries out an ATP-coupled ligase reaction, activating hydrogencarbonate by forming carboxy phosphate which reacts with ammonia to form carbamoyl phosphate. The protein is Carbamoyl phosphate synthase large chain of Pyrobaculum aerophilum (strain ATCC 51768 / DSM 7523 / JCM 9630 / CIP 104966 / NBRC 100827 / IM2).